The sequence spans 345 residues: Ferritin-like-encapsulin shell fusion protein (345 aa).

Residues methionine 1–asparagine 109 are ferritin-like domain. Fe cation-binding residues include glutamate 31, glutamate 61, and histidine 64. An encapsulin domain region spans residues valine 110–glutamate 345.

The protein in the N-terminal section; belongs to the ferritin-like superfamily. This sequence in the C-terminal section; belongs to the encapsulin family. Family 1 subfamily. In terms of assembly, 180 monomers assemble into 12 pentamers and 20 hexamers which further assemble into an icosahedral particle about 36.6 nm in diameter. The N-terminal domain (residues 1-99) crystallizes as 3 decamers.

It localises to the encapsulin nanocompartment. The catalysed reaction is 4 Fe(2+) + O2 + 4 H(+) = 4 Fe(3+) + 2 H2O. Its activity is regulated as follows. The ferroxidase activity is inhibited by zinc. Fusion of the shell and cargo protein of a type 1 encapsulin nanocompartment. The nanocompartment is probably involved in iron storage. Expression in E.coli generates spherical particles (PfSPs) about 30 nm in diameter. The purified N-terminus has ferroxidase activity. The polypeptide is Ferritin-like-encapsulin shell fusion protein (Pyrococcus furiosus (strain ATCC 43587 / DSM 3638 / JCM 8422 / Vc1)).